The primary structure comprises 210 residues: Outer-membrane lipoprotein carrier protein (210 aa).

Residues 1–26 (MHMIRRAAGALAVFAVAALAAAPAWA) form the signal peptide.

This sequence belongs to the LolA family. As to quaternary structure, monomer.

It localises to the periplasm. Participates in the translocation of lipoproteins from the inner membrane to the outer membrane. Only forms a complex with a lipoprotein if the residue after the N-terminal Cys is not an aspartate (The Asp acts as a targeting signal to indicate that the lipoprotein should stay in the inner membrane). This is Outer-membrane lipoprotein carrier protein from Bordetella pertussis (strain Tohama I / ATCC BAA-589 / NCTC 13251).